Here is a 160-residue protein sequence, read N- to C-terminus: SsrA-binding protein (160 aa).

The segment at 131 to 160 (KKEYDKRHTERERDSDRELQRAVRTKGKDD) is disordered.

This sequence belongs to the SmpB family.

The protein resides in the cytoplasm. Functionally, required for rescue of stalled ribosomes mediated by trans-translation. Binds to transfer-messenger RNA (tmRNA), required for stable association of tmRNA with ribosomes. tmRNA and SmpB together mimic tRNA shape, replacing the anticodon stem-loop with SmpB. tmRNA is encoded by the ssrA gene; the 2 termini fold to resemble tRNA(Ala) and it encodes a 'tag peptide', a short internal open reading frame. During trans-translation Ala-aminoacylated tmRNA acts like a tRNA, entering the A-site of stalled ribosomes, displacing the stalled mRNA. The ribosome then switches to translate the ORF on the tmRNA; the nascent peptide is terminated with the 'tag peptide' encoded by the tmRNA and targeted for degradation. The ribosome is freed to recommence translation, which seems to be the essential function of trans-translation. The sequence is that of SsrA-binding protein from Pseudomonas syringae pv. tomato (strain ATCC BAA-871 / DC3000).